Consider the following 1274-residue polypeptide: Paired amphipathic helix protein Sin3a (1274 aa).

Disordered stretches follow at residues 1 to 26 (MKRRLDDQESPVYAAQQRRIPGSTEA) and 85 to 110 (HHHPTAVQPHGGQVVQSHAHPAPPVA). Ser-10 carries the phosphoserine modification. One can recognise a PAH 1 domain in the interval 119 to 189 (QRLKVEDALS…MGFNTFLPPG (71 aa)). The segment at 119 to 196 (QRLKVEDALS…PPGYKIEVQT (78 aa)) is interaction with HCFC1. Glycyl lysine isopeptide (Lys-Gly) (interchain with G-Cter in SUMO2) cross-links involve residues Lys-122 and Lys-134. The segment at 205–297 (PGQVHQIPTH…ISLGTAPSLQ (93 aa)) is disordered. An interaction with REST region spans residues 205–479 (PGQVHQIPTH…KVRKALRSAE (275 aa)). Over residues 228–237 (SQPSSQSAPT) the composition is skewed to low complexity. The span at 252–266 (KPSQLQAHTPASQQT) shows a compositional bias: polar residues. Residues 267–282 (PPLPPYASPRSPPVQP) are compositionally biased toward pro residues. A Phosphoserine modification is found at Ser-277. Thr-284 carries the phosphothreonine modification. Over residues 284 to 297 (TPVTISLGTAPSLQ) the composition is skewed to polar residues. The PAH 2 domain maps to 300 to 383 (QPVEFNHAIN…SEFGQFLPDA (84 aa)). The tract at residues 398–443 (DSVRNDHGGTVKKPQLNNKPQRPSQNGCQIRRHSGTGATPPVKKKP) is disordered. Residues 412-425 (QLNNKPQRPSQNGC) show a composition bias toward polar residues. Residues 457 to 526 (SKHGVGTESL…NWFKNFLGYK (70 aa)) form the PAH 3 domain. Residues 459–526 (HGVGTESLFF…NWFKNFLGYK (68 aa)) form an interaction with SAP30 region. Position 470 is an N6-acetyllysine (Lys-470). Residues 524–851 (GYKESVHLES…EMDVDEATGA (328 aa)) are interaction with NCOR1. The interval 525 to 660 (YKESVHLESF…KFRLDNTLGG (136 aa)) is interactions with SUDS3 and SAP130. Lys-564 is covalently cross-linked (Glycyl lysine isopeptide (Lys-Gly) (interchain with G-Cter in SUMO2)). Residues 688 to 830 (NPSIAVPIVL…IPDLLFAQRG (143 aa)) are interactions with HDAC1 and ARID4B. Ser-833 carries the post-translational modification Phosphoserine. The segment covering 835-847 (VEEEEEEEMDVDE) has biased composition (acidic residues). The disordered stretch occupies residues 835 to 865 (VEEEEEEEMDVDEATGAPKKHNGVGGSPPKS). Residue Ser-861 is modified to Phosphoserine. Residues Lys-866 and Lys-876 each carry the N6-acetyllysine modification. Positions 889–968 (VNNNWYIFMR…YYPAFLDMVR (80 aa)) are interaction with OGT. A coiled-coil region spans residues 904 to 933 (CLRLLRICSQAERQIEEENREREWEREVLG). Residues Ser-941, Ser-1090, and Ser-1113 each carry the phosphoserine modification. The interval 1137-1157 (CQRGREQQEKEGKEGNSKKTM) is disordered. Residues 1139–1157 (RGREQQEKEGKEGNSKKTM) are compositionally biased toward basic and acidic residues.

As to quaternary structure, interacts with ARID4B, BRMS1L, HCFC1, HDAC1, HDAC2, MXI1, SAP30L, SAP130, SFPQ and TOPORS. Interacts with OGT (via TPRs 1-6); the interaction mediates transcriptional repression in parallel with histone deacetylase. Interacts with BAZ2A, MXD1, MXD3, MXD4, MBD2, DACH1, NCOR1, NR4A2, REST, RLIM, SAP30, SETDB1, SMYD2, and SUDS3. Interacts with PHF12 in a complex composed of HDAC1, PHF12 and SAP30. Interacts with TET1; the interaction recruits SIN3A to gene promoters. The large PER complex involved in the histone deacetylation is composed of at least HDAC1, PER2, SFPQ and SIN3A. Interacts with KLF11. Interacts with PPHLN1. Found in a complex with YY1, GON4L and HDAC1. Interacts (via PAH2) with FOXK1. Interacts with FOXK2. Found in a complex composed of at least SINHCAF, SIN3A, HDAC1, SAP30, RBBP4, OGT and TET1. Interacts with SINHCAF. Interacts with SPHK2. In terms of processing, SUMO1 sumoylated by TOPORS. Probably desumoylated by SENP2. As to expression, widely expressed. Highest levels in testis, lung and thymus. Expressed at relatively high levels throughout brain development. In adult mice, expression is high in neurogenic regions such as the subventricular zone, rostral migratory stream, olfactory bulb and dentate gyrus.

The protein resides in the nucleus. The protein localises to the nucleolus. In terms of biological role, acts as a transcriptional repressor. Corepressor for REST. Interacts with MXI1 to repress MYC responsive genes and antagonize MYC oncogenic activities. Also interacts with MXD1-MAX heterodimers to repress transcription by tethering SIN3A to DNA. Acts cooperatively with OGT to repress transcription in parallel with histone deacetylation. Involved in the control of the circadian rhythms. Required for the transcriptional repression of circadian target genes, such as PER1, mediated by the large PER complex through histone deacetylation. Cooperates with FOXK1 to regulate cell cycle progression probably by repressing cell cycle inhibitor genes expression. Required for cortical neuron differentiation and callosal axon elongation. The polypeptide is Paired amphipathic helix protein Sin3a (Sin3a) (Mus musculus (Mouse)).